The primary structure comprises 96 residues: MSAVTRCEDGLVLRLYIQPKASRDSIVGLHGDEVKVAITAPPVDGQANSHLTKFLGKQFRVAKSQIVIEKGELGRHKQVKIIHPQQIPPEIAALTE.

Belongs to the UPF0235 family.

In Salmonella typhi, this protein is UPF0235 protein YggU.